The following is a 124-amino-acid chain: uncharacterized protein (124 aa).

A dksA C4-type; degenerate zinc finger spans residues 73–94 (CEETGAPIPLAKLAVLPTARTA).

This is an uncharacterized protein from Bacillus subtilis (strain 168).